Here is a 366-residue protein sequence, read N- to C-terminus: MQTLKVDLGERSYPIHIGEGLLDQPELLVPHIAGRQVAIISNETVAPLYLERLTRSLGQFSVISVVLPDGEAYKNWETLQLIFDGLLTARHDRRTTIIALGGGVIGDMAGFAAACYQRGVDFIQIPTTLLSQVDSSVGGKTGINHPLGKNMVGAFYQPNVVLIDTTSLNTLPSRELSAGLAEVIKYGLICDEPFLTWLEENVDRLRALDQQALTYAIERSCAAKAAVVGADERESGVRATLNLGHTFGHAIETHMGYGVWLHGEAVAAGTVMALEMSARLGWITSQERDRGIRLFQRAGLPVIPPEEMSEADFLEHMAIDKKVIDGRLRLVLLRRMGEAVVTDDYPKEVLQATLGADYRALAQLKG.

NAD(+)-binding positions include 69-74 (DGEAYK), 103-107 (GVIGD), 127-128 (TT), Lys-140, and Lys-149. Glu-182, His-245, and His-262 together coordinate Zn(2+).

Belongs to the sugar phosphate cyclases superfamily. Dehydroquinate synthase family. Co(2+) is required as a cofactor. Zn(2+) serves as cofactor. Requires NAD(+) as cofactor.

Its subcellular location is the cytoplasm. The catalysed reaction is 7-phospho-2-dehydro-3-deoxy-D-arabino-heptonate = 3-dehydroquinate + phosphate. The protein operates within metabolic intermediate biosynthesis; chorismate biosynthesis; chorismate from D-erythrose 4-phosphate and phosphoenolpyruvate: step 2/7. In terms of biological role, catalyzes the conversion of 3-deoxy-D-arabino-heptulosonate 7-phosphate (DAHP) to dehydroquinate (DHQ). This chain is 3-dehydroquinate synthase, found in Pseudomonas fluorescens (strain ATCC BAA-477 / NRRL B-23932 / Pf-5).